We begin with the raw amino-acid sequence, 196 residues long: dTTP/UTP pyrophosphatase (196 aa).

Catalysis depends on aspartate 72, which acts as the Proton acceptor.

The protein belongs to the Maf family. YhdE subfamily. Requires a divalent metal cation as cofactor.

The protein localises to the cytoplasm. The enzyme catalyses dTTP + H2O = dTMP + diphosphate + H(+). It catalyses the reaction UTP + H2O = UMP + diphosphate + H(+). Nucleoside triphosphate pyrophosphatase that hydrolyzes dTTP and UTP. May have a dual role in cell division arrest and in preventing the incorporation of modified nucleotides into cellular nucleic acids. The protein is dTTP/UTP pyrophosphatase of Chlamydia trachomatis serovar L2 (strain ATCC VR-902B / DSM 19102 / 434/Bu).